An 837-amino-acid chain; its full sequence is Ribosome biogenesis ATPase RIX7 (837 aa).

2 disordered regions span residues R36 to E56 and I149 to L207. S42 bears the Phosphoserine mark. Positions Q43–E56 are enriched in acidic residues. Positions I149 to I163 are enriched in polar residues. Basic residues predominate over residues K176 to K192. G246 to T253 contributes to the ATP binding site. Positions P443–K468 are disordered. Residues S449–N461 show a composition bias toward acidic residues. G574–T581 provides a ligand contact to ATP.

This sequence belongs to the AAA ATPase family.

It localises to the nucleus. The protein localises to the nucleolus. Involved in ribosome biogenesis. Seems to be required for restructuring nucleoplasmic 60S pre-ribosomal particles to make them competent for nuclear export. The protein is Ribosome biogenesis ATPase RIX7 (RIX7) of Saccharomyces cerevisiae (strain ATCC 204508 / S288c) (Baker's yeast).